We begin with the raw amino-acid sequence, 535 residues long: Interferon lambda receptor 1 (535 aa).

The signal sequence occupies residues 1–20; that stretch reads MWRADRWAPLLLFLLQSALG. Topologically, residues 21 to 227 are extracellular; it reads RPRLAPPRNV…FLEAPGDKRA (207 aa). The region spanning 26 to 121 is the Fibronectin type-III domain; sequence PPRNVTLFSQ…ESRYLEYLFD (96 aa). N-linked (GlcNAc...) asparagine glycans are attached at residues Asn-29, Asn-36, and Asn-52. 3 disulfides stabilise this stretch: Cys-73-Cys-81, Cys-85-Cys-149, and Cys-194-Cys-216. A glycan (N-linked (GlcNAc...) asparagine) is linked at Asn-141. Residues 228-248 traverse the membrane as a helical segment; sequence VLAMPSLLLLLIAAVAAGVAW. Residues 249–535 lie on the Cytoplasmic side of the membrane; sequence KIMKGNPWFQ…GRMLGDYLVR (287 aa). 2 disordered regions span residues 301-419 and 478-520; these read NRPA…APCG and VNNP…SSVQ. Positions 321–336 are enriched in acidic residues; sequence STEDEDEDTDYDDDGD. The span at 350 to 360 shows a compositional bias: basic and acidic residues; it reads EKPRVMEHSET. Residues 376-396 are compositionally biased toward low complexity; that stretch reads GSDGSSAWDSSDRSWSSTGDS. Positions 397–414 are enriched in basic and acidic residues; sequence SYKDEVGSSSCLDRKEPD. Residues 482-503 show a composition bias toward acidic residues; it reads EGEEEQEDEEEEEEEEEEEDWE.

This sequence belongs to the type II cytokine receptor family. Heterodimer with IL10RB. Ubiquitinated by FBXO45-containing E3 ligase leading to proteasomal degradation.

The protein localises to the membrane. Functionally, the IFNLR1/IL10RB dimer is a receptor for the cytokine ligands IFNL2 and IFNL3 and mediates their antiviral activity. The ligand/receptor complex stimulate the activation of the JAK/STAT signaling pathway leading to the expression of IFN-stimulated genes (ISG), which contribute to the antiviral state. Determines the cell type specificity of the lambda interferon action. Shows a more restricted pattern of expression in the epithelial tissues thereby limiting responses to lambda interferons primarily to epithelial cells of the respiratory, gastrointestinal, and reproductive tracts. Seems not to be essential for early virus-activated host defense in vaginal infection, but plays an important role in Toll-like receptor (TLR)-induced antiviral defense. Plays a significant role in the antiviral immune defense in the intestinal epithelium. The sequence is that of Interferon lambda receptor 1 (Ifnlr1) from Mus musculus (Mouse).